Here is a 376-residue protein sequence, read N- to C-terminus: Lipoyl synthase, mitochondrial (376 aa).

[4Fe-4S] cluster-binding residues include C102, C107, C113, C133, C137, C140, and S348. The region spanning G116 to A337 is the Radical SAM core domain.

Belongs to the radical SAM superfamily. Lipoyl synthase family. [4Fe-4S] cluster is required as a cofactor.

Its subcellular location is the mitochondrion. The enzyme catalyses [[Fe-S] cluster scaffold protein carrying a second [4Fe-4S](2+) cluster] + N(6)-octanoyl-L-lysyl-[protein] + 2 oxidized [2Fe-2S]-[ferredoxin] + 2 S-adenosyl-L-methionine + 4 H(+) = [[Fe-S] cluster scaffold protein] + N(6)-[(R)-dihydrolipoyl]-L-lysyl-[protein] + 4 Fe(3+) + 2 hydrogen sulfide + 2 5'-deoxyadenosine + 2 L-methionine + 2 reduced [2Fe-2S]-[ferredoxin]. Its pathway is protein modification; protein lipoylation via endogenous pathway; protein N(6)-(lipoyl)lysine from octanoyl-[acyl-carrier-protein]: step 2/2. In terms of biological role, catalyzes the radical-mediated insertion of two sulfur atoms into the C-6 and C-8 positions of the octanoyl moiety bound to the lipoyl domains of lipoate-dependent enzymes, thereby converting the octanoylated domains into lipoylated derivatives. The chain is Lipoyl synthase, mitochondrial from Branchiostoma floridae (Florida lancelet).